Reading from the N-terminus, the 486-residue chain is Probable transporter MCH1 (486 aa).

Residues 1–29 are Cytoplasmic-facing; that stretch reads MPLSKVEHYLSYHTRLLLPHVLSLQSSHR. The helical transmembrane segment at 30–50 threads the bilayer; the sequence is VAYIFSLLSAVSTGFITLISL. The Vacuolar portion of the chain corresponds to 51-67; sequence YSQPWQKHLNYSSWQIN. N-linked (GlcNAc...) asparagine glycosylation occurs at Asn-60. Residues 68–88 form a helical membrane-spanning segment; that stretch reads TIASMTNLGMYLTPPILGMIA. Over 89–93 the chain is Cytoplasmic; it reads DSHGP. Residues 94 to 114 form a helical membrane-spanning segment; the sequence is ITLSLLAIIGFIPSYSYLAYV. At 115-133 the chain is on the vacuolar side; sequence FNHPELSLGGNGDSSFNLS. A glycan (N-linked (GlcNAc...) asparagine) is linked at Asn-131. The helical transmembrane segment at 134-154 threads the bilayer; that stretch reads IICFVFIGISTSALYFSALLT. Residues 155–163 lie on the Cytoplasmic side of the membrane; sequence CTKLYPHTK. The chain crosses the membrane as a helical span at residues 164-184; the sequence is LLSISLPTTCYGISSVVGSQL. Topologically, residues 185 to 212 are vacuolar; it reads LRIKWFWSSNASSSSSNSDLNLGRVFQT. The N-linked (GlcNAc...) asparagine glycan is linked to Asn-194. Residues 213 to 233 traverse the membrane as a helical segment; it reads FALVYVVIGLLAWIATSVVSL. At 234–279 the chain is on the cytoplasmic side; it reads LHFNEEQDNQKRLDDQTDVEQSPLLERSNHVQEKFTQTMLRIFSDP. Phosphoserine is present on Ser-255. A helical membrane pass occupies residues 280-300; that stretch reads VTYILAVSILLSLGPLEMFIA. Topologically, residues 301–320 are vacuolar; the sequence is NMGSLTNLLVQLDAPTLSTK. A helical membrane pass occupies residues 321-343; that stretch reads LLSTYALSSTFTRLLTGIVADFF. Topologically, residues 344–347 are cytoplasmic; the sequence is AKKK. A helical transmembrane segment spans residues 348 to 368; sequence ISIKWILLTFLSLGVCAQLFL. Over 369–385 the chain is Vacuolar; sequence LKMTSSASPWGLVPTGS. A helical membrane pass occupies residues 386-406; the sequence is LVGIVYGGLFTVYPTLVLLVW. Residues 407–413 are Cytoplasmic-facing; the sequence is GERSFGT. A helical transmembrane segment spans residues 414–434; that stretch reads VYGSLLIAPAIGSMIFCMLYA. The Vacuolar portion of the chain corresponds to 435-456; sequence KFYDSRCMSGGGDLRNPSCISA. The chain crosses the membrane as a helical span at residues 457–477; the sequence is VYKYSSIAFVVSAVLSAVVFW. Residues 478–486 lie on the Cytoplasmic side of the membrane; that stretch reads KLKSRKLRI.

The protein belongs to the major facilitator superfamily.

Its subcellular location is the vacuole membrane. Functionally, probable transporter. Does not act in the transport of monocarboxylic acids across the plasma membrane. This Saccharomyces cerevisiae (strain ATCC 204508 / S288c) (Baker's yeast) protein is Probable transporter MCH1 (MCH1).